The primary structure comprises 252 residues: 5'-nucleotidase SurE (252 aa).

Positions 8, 9, 40, and 93 each coordinate a divalent metal cation.

Belongs to the SurE nucleotidase family. A divalent metal cation serves as cofactor.

It is found in the cytoplasm. The catalysed reaction is a ribonucleoside 5'-phosphate + H2O = a ribonucleoside + phosphate. In terms of biological role, nucleotidase that shows phosphatase activity on nucleoside 5'-monophosphates. The polypeptide is 5'-nucleotidase SurE (Methylocella silvestris (strain DSM 15510 / CIP 108128 / LMG 27833 / NCIMB 13906 / BL2)).